We begin with the raw amino-acid sequence, 118 residues long: UPF0449 protein C19orf25 homolog (118 aa).

Y63 carries the post-translational modification Phosphotyrosine. The stretch at 69–105 forms a coiled coil; that stretch reads YVAMNQRLQQAGAQLEQKRADLQQAGEELERDISQVG.

The protein belongs to the UPF0449 family.

This Bos taurus (Bovine) protein is UPF0449 protein C19orf25 homolog.